A 319-amino-acid chain; its full sequence is Malate dehydrogenase (319 aa).

NAD(+) contacts are provided by residues G10–G15 and D34. Residues R83 and R89 each coordinate substrate. Residues N96 and I119 to N121 each bind NAD(+). Residues N121 and R152 each coordinate substrate. The Proton acceptor role is filled by H176.

This sequence belongs to the LDH/MDH superfamily. MDH type 3 family.

The enzyme catalyses (S)-malate + NAD(+) = oxaloacetate + NADH + H(+). Catalyzes the reversible oxidation of malate to oxaloacetate. The polypeptide is Malate dehydrogenase (Francisella tularensis subsp. holarctica (strain FTNF002-00 / FTA)).